The primary structure comprises 143 residues: MSARRPPRATPTPCPCGLGAEYDACCGRYHRGDAVPPNAEALMRSRYTAYVMGNMDWVRQTWHPSTCPADLLPDTATRWLGLSVKAHSQQDDTHAEVEFVARYKVGGRAWRLHERSRFVREPRAAGEPPVWLYVDGDMIGEAS.

Belongs to the UPF0225 family.

This chain is UPF0225 protein Reut_A0143, found in Cupriavidus pinatubonensis (strain JMP 134 / LMG 1197) (Cupriavidus necator (strain JMP 134)).